We begin with the raw amino-acid sequence, 262 residues long: Deaminated glutathione amidase (262 aa).

Residues 1–238 form the CN hydrolase domain; that stretch reads MLVAAGQFAV…PALIMAEVTP (238 aa). Glutamate 40 (proton acceptor) is an active-site residue. Lysine 110 functions as the Proton donor in the catalytic mechanism. Catalysis depends on cysteine 147, which acts as the Nucleophile.

This sequence belongs to the carbon-nitrogen hydrolase superfamily. NIT1/NIT2 family.

The catalysed reaction is N-(4-oxoglutaryl)-L-cysteinylglycine + H2O = L-cysteinylglycine + 2-oxoglutarate. Its function is as follows. Hydrolyzes deaminated glutathione (dGSH) to 2-oxoglutarate and L-cysteinylglycine, and no activity on glutathione or L-glutamine. May function as a metabolite repair enzyme. The chain is Deaminated glutathione amidase (ybeM) from Escherichia coli O157:H7.